We begin with the raw amino-acid sequence, 103 residues long: Large ribosomal subunit protein bL25 (103 aa).

It belongs to the bacterial ribosomal protein bL25 family. In terms of assembly, part of the 50S ribosomal subunit; part of the 5S rRNA/L5/L18/L25 subcomplex. Contacts the 5S rRNA. Binds to the 5S rRNA independently of L5 and L18.

In terms of biological role, this is one of the proteins that binds to the 5S RNA in the ribosome where it forms part of the central protuberance. This chain is Large ribosomal subunit protein bL25, found in Blochmanniella floridana.